The chain runs to 116 residues: uncharacterized protein (116 aa).

The chain crosses the membrane as a helical span at residues 89–109; that stretch reads VGFVILILLYILTNPNAIELI.

It belongs to the M.jannaschii MJ0023/MJ0349/MJ1072/MJ1074/MJ1107/MJECL16 family.

The protein localises to the membrane. This is an uncharacterized protein from Methanocaldococcus jannaschii (strain ATCC 43067 / DSM 2661 / JAL-1 / JCM 10045 / NBRC 100440) (Methanococcus jannaschii).